A 428-amino-acid chain; its full sequence is Serine--tRNA ligase (428 aa).

235–237 provides a ligand contact to L-serine; that stretch reads TAE. 266–268 contributes to the ATP binding site; it reads RSE. L-serine is bound at residue E289. Residue 353-356 coordinates ATP; it reads EISS. S389 provides a ligand contact to L-serine.

Belongs to the class-II aminoacyl-tRNA synthetase family. Type-1 seryl-tRNA synthetase subfamily. In terms of assembly, homodimer. The tRNA molecule binds across the dimer.

The protein resides in the cytoplasm. The catalysed reaction is tRNA(Ser) + L-serine + ATP = L-seryl-tRNA(Ser) + AMP + diphosphate + H(+). The enzyme catalyses tRNA(Sec) + L-serine + ATP = L-seryl-tRNA(Sec) + AMP + diphosphate + H(+). It functions in the pathway aminoacyl-tRNA biosynthesis; selenocysteinyl-tRNA(Sec) biosynthesis; L-seryl-tRNA(Sec) from L-serine and tRNA(Sec): step 1/1. Its function is as follows. Catalyzes the attachment of serine to tRNA(Ser). Is also able to aminoacylate tRNA(Sec) with serine, to form the misacylated tRNA L-seryl-tRNA(Sec), which will be further converted into selenocysteinyl-tRNA(Sec). The protein is Serine--tRNA ligase of Shewanella sp. (strain W3-18-1).